The following is a 98-amino-acid chain: Small ribosomal subunit protein bS6 (98 aa).

Belongs to the bacterial ribosomal protein bS6 family.

Binds together with bS18 to 16S ribosomal RNA. The protein is Small ribosomal subunit protein bS6 of Staphylococcus epidermidis (strain ATCC 35984 / DSM 28319 / BCRC 17069 / CCUG 31568 / BM 3577 / RP62A).